A 328-amino-acid polypeptide reads, in one-letter code: MAKPAKRVAVTGAAGQIAYSLLFRIANGDLLGKDQPVILQLLDLPQAQAAVKGVVMELDDCAFPLLAGVVITDDPKVAFKDADVALLVGARPRSKGMERKDLLSANAEIFTVQGAALNEVASRDVKVLVVGNPANTNAYIAMKSAPDLPKKNFTAMLRLDHNRALSQLAAKSGKPVASIEKLAVWGNHSPTMYPDFRFATAEGESLLKLINDDVWNRDTFIPTVGKRGAAIIEARGLSSAASAANAAIDHVRDWVLGTNGKWVTMGIPSDGSYGIPEDIIYGVPVVCENGEYKRVEGLEIDAFSREKMDGTLAELLEERDGVAHLLKN.

12-18 (GAAGQIA) is an NAD(+) binding site. Substrate-binding residues include Arg-93 and Arg-99. Residues Asn-106, Gln-113, and 130-132 (VGN) contribute to the NAD(+) site. Substrate is bound by residues Asn-132 and Arg-163. His-188 (proton acceptor) is an active-site residue.

This sequence belongs to the LDH/MDH superfamily. MDH type 2 family.

It catalyses the reaction (S)-malate + NAD(+) = oxaloacetate + NADH + H(+). In terms of biological role, catalyzes the reversible oxidation of malate to oxaloacetate. This chain is Malate dehydrogenase, found in Burkholderia ambifaria (strain ATCC BAA-244 / DSM 16087 / CCUG 44356 / LMG 19182 / AMMD) (Burkholderia cepacia (strain AMMD)).